The primary structure comprises 76 residues: Acyl carrier protein (76 aa).

One can recognise a Carrier domain in the interval 1–76; the sequence is MSIEERVKKI…SAIDYVQNNQ (76 aa). Residue S36 is modified to O-(pantetheine 4'-phosphoryl)serine.

It belongs to the acyl carrier protein (ACP) family. 4'-phosphopantetheine is transferred from CoA to a specific serine of apo-ACP by AcpS. This modification is essential for activity because fatty acids are bound in thioester linkage to the sulfhydryl of the prosthetic group.

It localises to the cytoplasm. The protein operates within lipid metabolism; fatty acid biosynthesis. Functionally, carrier of the growing fatty acid chain in fatty acid biosynthesis. This chain is Acyl carrier protein, found in Histophilus somni (strain 129Pt) (Haemophilus somnus).